A 452-amino-acid polypeptide reads, in one-letter code: Chloride/fluoride channel protein (452 aa).

10 helical membrane passes run 23-43, 57-77, 97-117, 160-180, 188-208, 222-242, 264-284, 315-337, 344-364, and 386-408; these read WLALAGLVALLAGSASALFLL, WVIWLLPVAGFAVGLAYHLIG, IVPLRMVPMVLIGTVVSHLFG, FASVFGTPLAGALFGLEVLAI, LFPCVVAAIVADQVGQAWGVV, LWSVMAVVAAGIVFGLTGLLF, PFAGGLLIAVAVWALGSNHYI, VFTVVSLGTGFKGGEVTPLFYIG, LAPLLHLPFGMLAGIGFVAVF, and IAPLAAIACIASYLVSGHTGIYH.

The protein belongs to the chloride channel (TC 2.A.49) family.

It is found in the cell membrane. Its function is as follows. Transports chloride and fluoride with similar efficiency. The protein is Chloride/fluoride channel protein (eriC) of Pseudomonas syringae pv. tomato (strain ATCC BAA-871 / DC3000).